Here is a 570-residue protein sequence, read N- to C-terminus: Proline--tRNA ligase (570 aa).

This sequence belongs to the class-II aminoacyl-tRNA synthetase family. ProS type 1 subfamily. As to quaternary structure, homodimer.

Its subcellular location is the cytoplasm. The enzyme catalyses tRNA(Pro) + L-proline + ATP = L-prolyl-tRNA(Pro) + AMP + diphosphate. Catalyzes the attachment of proline to tRNA(Pro) in a two-step reaction: proline is first activated by ATP to form Pro-AMP and then transferred to the acceptor end of tRNA(Pro). As ProRS can inadvertently accommodate and process non-cognate amino acids such as alanine and cysteine, to avoid such errors it has two additional distinct editing activities against alanine. One activity is designated as 'pretransfer' editing and involves the tRNA(Pro)-independent hydrolysis of activated Ala-AMP. The other activity is designated 'posttransfer' editing and involves deacylation of mischarged Ala-tRNA(Pro). The misacylated Cys-tRNA(Pro) is not edited by ProRS. The protein is Proline--tRNA ligase of Clostridium perfringens (strain ATCC 13124 / DSM 756 / JCM 1290 / NCIMB 6125 / NCTC 8237 / Type A).